We begin with the raw amino-acid sequence, 227 residues long: UPF0758 protein LPC_1989 (227 aa).

The region spanning 102–225 (QLSNTQQTYA…YSIFAENKWV (124 aa)) is the MPN domain. Zn(2+) is bound by residues His173, His175, and Asp186. The JAMM motif motif lies at 173–186 (HNHPSGLSDASQQD).

It belongs to the UPF0758 family.

The protein is UPF0758 protein LPC_1989 of Legionella pneumophila (strain Corby).